Here is a 269-residue protein sequence, read N- to C-terminus: uncharacterized protein (269 aa).

Residues 1-16 (MTDVPSKPPQTTPPPK) show a composition bias toward pro residues. 2 disordered regions span residues 1-110 (MTDV…TISG) and 157-269 (ILQQ…PTIQ). Positions 21 to 45 (APTTIFSSPPQLPDRSSLNISHTAS) are enriched in polar residues. Residues 46–58 (TPTLTPTPLQQQQ) show a composition bias toward low complexity. A compositionally biased stretch (polar residues) spans 80-93 (SFSNSPNRQTQSFI). The span at 159–181 (QQPQQSHSPQQQQQQHTPNHQQP) shows a compositional bias: low complexity. Residues 182-195 (LSPQQQKDLAQKRS) are compositionally biased toward polar residues. The segment covering 198–213 (PLPPRPNKNRPLPTPI) has biased composition (pro residues).

This is an uncharacterized protein from Dictyostelium discoideum (Social amoeba).